We begin with the raw amino-acid sequence, 297 residues long: Probable esterase afoC (297 aa).

The Charge relay system role is filled by Ser-136. Over residues Ala-204–Ser-217 the composition is skewed to low complexity. The interval Ala-204 to His-226 is disordered. Active-site charge relay system residues include Asp-240 and His-267.

The protein belongs to the LovG family.

Probable esterase; part of the gene cluster that mediates the biosynthesis of asperfuranone, a probable antitumor agent. The polyketide synthase afoG is responsible for producing the 3,5-dimethyloctadienone moiety from acetyl-CoA, three malonyl-CoA, and two S-adenosyl methionines (SAM). The 3,5-dimethyloctadienone moiety is then loaded onto the SAT domain of afoE and extended with four malonyl-CoA and one SAM, which leads to the formation of 2,4-dihydroxy-6-(5,7-dimethyl-2-oxo-trans-3-trans-5-nonadienyl)-3-methylbenzaldehyde (compound 2) after reductive release and aldol condensation. AfoD is the next enzyme in the biosynthesis sequence and hydroxylates the side chain at the benzylic position of compound 2. After benzylic hydroxylation, a furan ring is formed after five-member ring hemiacetal formation and water elimination. AfoF and afoC are proposed to oxidize the R-diketone proton and to reduce the unconjugated carbonyl group, respectively, to generate asperfuranone. Since no intermediates could be isolated from afoF and afoC deletants, the sequence of these two enzymes is not fully understood. Moreover, since afoC deletant still produces a small amount of asperfuranone, other endogenous oxidoreductases might catalyze the same reaction with much less efficiency. In Emericella nidulans (strain FGSC A4 / ATCC 38163 / CBS 112.46 / NRRL 194 / M139) (Aspergillus nidulans), this protein is Probable esterase afoC.